A 236-amino-acid chain; its full sequence is Ribonuclease 3 (236 aa).

In terms of domain architecture, RNase III spans 13–138 (TEKVFKISGY…LIGAIYVDGG (126 aa)). E51 is a binding site for Mg(2+). The active site involves D55. Mg(2+) is bound by residues N124 and E127. E127 is an active-site residue. A DRBM domain is found at 164 to 232 (DAKTALQEWA…AKLMLEKVTK (69 aa)).

It belongs to the ribonuclease III family. Homodimer. Requires Mg(2+) as cofactor.

It localises to the cytoplasm. It carries out the reaction Endonucleolytic cleavage to 5'-phosphomonoester.. Functionally, digests double-stranded RNA. Involved in the processing of primary rRNA transcript to yield the immediate precursors to the large and small rRNAs (23S and 16S). Processes some mRNAs, and tRNAs when they are encoded in the rRNA operon. Processes pre-crRNA and tracrRNA of type II CRISPR loci if present in the organism. This is Ribonuclease 3 from Anaplasma phagocytophilum (strain HZ).